Reading from the N-terminus, the 285-residue chain is Small ribosomal subunit biogenesis GTPase RsgA (285 aa).

A CP-type G domain is found at 56–217 (DNLLIRPIVA…IIDTPGFSSI (162 aa)). GTP-binding positions include 105–108 (NKID) and 159–167 (GPSGVGKSS). Residues C241, C246, H248, and C254 each coordinate Zn(2+).

This sequence belongs to the TRAFAC class YlqF/YawG GTPase family. RsgA subfamily. Monomer. Associates with 30S ribosomal subunit, binds 16S rRNA. It depends on Zn(2+) as a cofactor.

It is found in the cytoplasm. In terms of biological role, one of several proteins that assist in the late maturation steps of the functional core of the 30S ribosomal subunit. Helps release RbfA from mature subunits. May play a role in the assembly of ribosomal proteins into the subunit. Circularly permuted GTPase that catalyzes slow GTP hydrolysis, GTPase activity is stimulated by the 30S ribosomal subunit. This is Small ribosomal subunit biogenesis GTPase RsgA from Fusobacterium nucleatum subsp. nucleatum (strain ATCC 25586 / DSM 15643 / BCRC 10681 / CIP 101130 / JCM 8532 / KCTC 2640 / LMG 13131 / VPI 4355).